The chain runs to 680 residues: DNA-directed RNA polymerase subunit beta' (680 aa).

4 residues coordinate Zn(2+): Cys69, Cys71, Cys87, and Cys90. Residues Asp489, Asp491, and Asp493 each coordinate Mg(2+).

It belongs to the RNA polymerase beta' chain family. RpoC1 subfamily. In plastids the minimal PEP RNA polymerase catalytic core is composed of four subunits: alpha, beta, beta', and beta''. When a (nuclear-encoded) sigma factor is associated with the core the holoenzyme is formed, which can initiate transcription. It depends on Mg(2+) as a cofactor. Zn(2+) serves as cofactor.

The protein localises to the plastid. It is found in the chloroplast. It carries out the reaction RNA(n) + a ribonucleoside 5'-triphosphate = RNA(n+1) + diphosphate. Its function is as follows. DNA-dependent RNA polymerase catalyzes the transcription of DNA into RNA using the four ribonucleoside triphosphates as substrates. This is DNA-directed RNA polymerase subunit beta' from Amborella trichopoda.